Here is a 956-residue protein sequence, read N- to C-terminus: Thrombospondin-3 (956 aa).

A signal peptide spans 1-21 (MEKPELWGVLALLLLCSYTCG). The Laminin G-like domain maps to 22 to 193 (SQDLQVIDLL…VESMKIILGG (172 aa)). Intrachain disulfides connect cysteine 278-cysteine 289, cysteine 283-cysteine 300, cysteine 303-cysteine 314, cysteine 320-cysteine 332, cysteine 326-cysteine 341, cysteine 344-cysteine 368, cysteine 374-cysteine 388, cysteine 382-cysteine 397, cysteine 400-cysteine 412, cysteine 418-cysteine 432, cysteine 426-cysteine 442, cysteine 444-cysteine 455, cysteine 471-cysteine 478, cysteine 483-cysteine 503, cysteine 519-cysteine 539, cysteine 542-cysteine 562, cysteine 578-cysteine 598, cysteine 601-cysteine 621, cysteine 639-cysteine 659, cysteine 679-cysteine 699, and cysteine 715-cysteine 936. Asparagine 310 carries N-linked (GlcNAc...) asparagine glycosylation. The region spanning 316-354 (DINECAHADPCFPGSSCINTMPGFHCEACPPGYKGTRVS) is the EGF-like 1; calcium-binding domain. An EGF-like 2; calcium-binding domain is found at 370–410 (DIDECNDGNNGGCDPNSICTNTVGSFKCGPCRLGFLGNQSQ). Asparagine 407 carries an N-linked (GlcNAc...) asparagine glycan. The EGF-like 3 domain occupies 414–456 (PARTCHSPAHSPCHIHAHCLFERNGAVSCQCNVGWAGNGNVCG). TSP type-3 repeat units follow at residues 457-491 (PDTDIDGYPDQALPCMDNNKHCKQDNCLLTPNSGQ), 492-527 (EDADNDGVGDQCDDDADGDGIKNVEDNCRLFPNKDQ), 528-550 (QNSDTDSFGDACDNCPNVPNNDQ), 551-586 (KDTDGNGEGDACDNDVDGDGIPNGLDNCPKVPNPLQ), 587-609 (TDRDEDGVGDACDSCPEMSNPTQ), 610-647 (TDADSDLVGDVCDTNEDSDGDGHQDTKDNCPQLPNSSQ), 648-687 (LDSDNDGLGDECDGDDDNDGVPDYIPPGPDNCRLVPNPNQ), and 688-723 (KDSDGNGVGDVCEDDFDNDAVVDPLDVCPESAEVTL). 2 disordered regions span residues 518–537 (NCRLFPNKDQQNSDTDSFGD) and 546–699 (PNND…GDVC). Acidic residues predominate over residues 555–568 (GNGEGDACDNDVDG). The segment covering 612 to 628 (ADSDLVGDVCDTNEDSD) has biased composition (acidic residues). The N-linked (GlcNAc...) asparagine glycan is linked to asparagine 644. The segment covering 650–667 (SDNDGLGDECDGDDDNDG) has biased composition (acidic residues). Residues 727–941 (RAYQTVILDP…LQYRCNDTVP (215 aa)) form the TSP C-terminal domain. N-linked (GlcNAc...) asparagine glycosylation is present at asparagine 937.

It belongs to the thrombospondin family. Oligomer; disulfide-linked. Brain, lung and cartilage.

In terms of biological role, adhesive glycoprotein that mediates cell-to-cell and cell-to-matrix interactions. Can bind to fibrinogen, fibronectin, laminin and type V collagen. The chain is Thrombospondin-3 (Thbs3) from Mus musculus (Mouse).